We begin with the raw amino-acid sequence, 254 residues long: UPF0246 protein FTF1693c (254 aa).

It belongs to the UPF0246 family.

This is UPF0246 protein FTF1693c from Francisella tularensis subsp. tularensis (strain FSC 198).